A 167-amino-acid chain; its full sequence is MAKEQQVQANDLQEKLIAVNRVSKTVKGGRIMSFTALTVVGDGNGRVGFGYGKAREVPAAIQKAMEKARRSMVTIALNEGTLHHPVKGRHSGSKVYMQPAAEGTGVIAGGAMRAVLEVAGVHNVLSKAYGSTNPINIVRATIDALVDVKSPEMVAAKRGLTVEAISE.

Residues 12–75 (LQEKLIAVNR…EKARRSMVTI (64 aa)) form the S5 DRBM domain.

The protein belongs to the universal ribosomal protein uS5 family. In terms of assembly, part of the 30S ribosomal subunit. Contacts proteins S4 and S8.

Its function is as follows. With S4 and S12 plays an important role in translational accuracy. Located at the back of the 30S subunit body where it stabilizes the conformation of the head with respect to the body. The polypeptide is Small ribosomal subunit protein uS5 (Vibrio cholerae serotype O1 (strain ATCC 39541 / Classical Ogawa 395 / O395)).